The chain runs to 485 residues: Ribulose bisphosphate carboxylase large chain (485 aa).

Residues asparagine 124 and threonine 174 each coordinate substrate. Lysine 176 acts as the Proton acceptor in catalysis. Lysine 178 lines the substrate pocket. Mg(2+) is bound by residues lysine 202, aspartate 204, and glutamate 205. At lysine 202 the chain carries N6-carboxylysine. The active-site Proton acceptor is the histidine 294. Positions 295, 327, and 379 each coordinate substrate.

This sequence belongs to the RuBisCO large chain family. Type I subfamily. In terms of assembly, heterohexadecamer of 8 large chains and 8 small chains. It depends on Mg(2+) as a cofactor.

The catalysed reaction is 2 (2R)-3-phosphoglycerate + 2 H(+) = D-ribulose 1,5-bisphosphate + CO2 + H2O. The enzyme catalyses D-ribulose 1,5-bisphosphate + O2 = 2-phosphoglycolate + (2R)-3-phosphoglycerate + 2 H(+). Functionally, ruBisCO catalyzes two reactions: the carboxylation of D-ribulose 1,5-bisphosphate, the primary event in carbon dioxide fixation, as well as the oxidative fragmentation of the pentose substrate. Both reactions occur simultaneously and in competition at the same active site. In Rhodopseudomonas palustris (strain BisA53), this protein is Ribulose bisphosphate carboxylase large chain.